The primary structure comprises 264 residues: Glycerol uptake facilitator protein (264 aa).

The Cytoplasmic portion of the chain corresponds to 1 to 3 (MDK). A helical transmembrane segment spans residues 4–32 (SLKANCIGEFLGTALLIFFGVGCVAALKV). The Periplasmic portion of the chain corresponds to 33–37 (AGASF). A helical membrane pass occupies residues 38-58 (GLWEISIMWGMGVALAVYATA). The Cytoplasmic segment spans residues 59–61 (GLS). An intramembrane segment occupies 62–65 (GAHL). An NPA 1 motif is present at residues 66 to 68 (NPA). The helical intramembrane region spans 66 to 76 (NPAVTIALWKF). Residues 77-82 (ACFDGK) are Cytoplasmic-facing. The helical transmembrane segment at 83–106 (KVIPYIISQMLGAFFAAALVYALY) threads the bilayer. Residues 107–141 (RNVFIDYETVHNIVRGTQESLSLAGTFSTYPHPSL) are Periplasmic-facing. The helical transmembrane segment at 142–167 (SIGGAFAVEFVITAILMALIMALTDD) threads the bilayer. The Cytoplasmic portion of the chain corresponds to 168–175 (GNGVPRGP). Residues 176–192 (LAPLLIGILIAVIGGAM) traverse the membrane as a helical segment. At 193-196 (GPLT) the chain is on the periplasmic side. The stretch at 197–200 (GFAM) is an intramembrane region. An NPA 2 motif is present at residues 201–203 (NPA). Residues 201 to 214 (NPARDFGPKFFAYL) constitute an intramembrane region (helical). Residues 215–229 (AGWGELALTGGREIP) are Periplasmic-facing. The helical transmembrane segment at 230–252 (YFIVPMVAPVLGALAGAWLYKKA) threads the bilayer. Over 253-264 (IGGNLPCNCGCE) the chain is Cytoplasmic.

It belongs to the MIP/aquaporin (TC 1.A.8) family.

It localises to the cell inner membrane. It carries out the reaction glycerol(in) = glycerol(out). Mediates glycerol diffusion across the cytoplasmic membrane via a pore-type mechanism. The chain is Glycerol uptake facilitator protein (glpF) from Haemophilus influenzae (strain ATCC 51907 / DSM 11121 / KW20 / Rd).